The sequence spans 71 residues: Exodeoxyribonuclease 7 small subunit (71 aa).

This sequence belongs to the XseB family. As to quaternary structure, heterooligomer composed of large and small subunits.

Its subcellular location is the cytoplasm. The enzyme catalyses Exonucleolytic cleavage in either 5'- to 3'- or 3'- to 5'-direction to yield nucleoside 5'-phosphates.. In terms of biological role, bidirectionally degrades single-stranded DNA into large acid-insoluble oligonucleotides, which are then degraded further into small acid-soluble oligonucleotides. The polypeptide is Exodeoxyribonuclease 7 small subunit (Endomicrobium trichonymphae).